A 333-amino-acid polypeptide reads, in one-letter code: Phosphoribosylformylglycinamidine cyclo-ligase (333 aa).

The protein belongs to the AIR synthase family.

Its subcellular location is the cytoplasm. The catalysed reaction is 2-formamido-N(1)-(5-O-phospho-beta-D-ribosyl)acetamidine + ATP = 5-amino-1-(5-phospho-beta-D-ribosyl)imidazole + ADP + phosphate + H(+). It functions in the pathway purine metabolism; IMP biosynthesis via de novo pathway; 5-amino-1-(5-phospho-D-ribosyl)imidazole from N(2)-formyl-N(1)-(5-phospho-D-ribosyl)glycinamide: step 2/2. The sequence is that of Phosphoribosylformylglycinamidine cyclo-ligase from Methanococcoides burtonii (strain DSM 6242 / NBRC 107633 / OCM 468 / ACE-M).